We begin with the raw amino-acid sequence, 152 residues long: MRLPLSHSPEHVEMALLSNILAAYSFVSENPERAALYFVSGVCIGLVLTLAALVIRISCHTDCRRRPGKKFLQDRESSSDSSDSEDGSEDTVSDLSVRRHRRFERTLNKNVFTSAEELERAQRLEERERIIREIWMNGQPEVPGTRSLNRYY.

Residues 1–60 (MRLPLSHSPEHVEMALLSNILAAYSFVSENPERAALYFVSGVCIGLVLTLAALVIRISCH) are necessary for the localization and biological activity. The chain crosses the membrane as a helical span at residues 35-55 (ALYFVSGVCIGLVLTLAALVI). Residues 70 to 97 (KFLQDRESSSDSSDSEDGSEDTVSDLSV) are disordered. Over residues 82-92 (SDSEDGSEDTV) the composition is skewed to acidic residues. A Phosphothreonine modification is found at Thr106. Phosphoserine; by FAM20C is present on Ser114.

The protein belongs to the EVA1 family. As to expression, expressed in lung, kidney, liver, pancreas, placenta, but not in heart and skeletal muscle.

The protein localises to the endoplasmic reticulum membrane. The protein resides in the lysosome membrane. Functionally, acts as a regulator of programmed cell death, mediating both autophagy and apoptosis. The chain is Protein eva-1 homolog A (EVA1A) from Homo sapiens (Human).